The following is a 434-amino-acid chain: Mannose-6-phosphate isomerase (434 aa).

Residues Q109, H111, and E136 each coordinate Zn(2+). Polar residues predominate over residues 181 to 191; the sequence is SLGLPTSQPPD. The disordered stretch occupies residues 181–200; sequence SLGLPTSQPPDTSLFKPTES. Residue H291 participates in Zn(2+) binding. R310 is a catalytic residue.

This sequence belongs to the mannose-6-phosphate isomerase type 1 family. Requires Zn(2+) as cofactor.

It is found in the cytoplasm. The enzyme catalyses D-mannose 6-phosphate = D-fructose 6-phosphate. It functions in the pathway nucleotide-sugar biosynthesis; GDP-alpha-D-mannose biosynthesis; alpha-D-mannose 1-phosphate from D-fructose 6-phosphate: step 1/2. In terms of biological role, involved in the synthesis of the GDP-mannose and dolichol-phosphate-mannose required for a number of critical mannosyl transfer reactions. In Cryptococcus neoformans var. neoformans serotype D (strain JEC21 / ATCC MYA-565) (Filobasidiella neoformans), this protein is Mannose-6-phosphate isomerase (MAN1).